Here is a 273-residue protein sequence, read N- to C-terminus: Phosphate import ATP-binding protein PstB 1 (273 aa).

Positions 27 to 268 (ISIEHLSLYY…PLKKQTEDYI (242 aa)) constitute an ABC transporter domain. 59–66 (GPSGCGKS) serves as a coordination point for ATP.

Belongs to the ABC transporter superfamily. Phosphate importer (TC 3.A.1.7) family. In terms of assembly, the complex is composed of two ATP-binding proteins (PstB), two transmembrane proteins (PstC and PstA) and a solute-binding protein (PstS).

Its subcellular location is the cell inner membrane. It carries out the reaction phosphate(out) + ATP + H2O = ADP + 2 phosphate(in) + H(+). Part of the ABC transporter complex PstSACB involved in phosphate import. Responsible for energy coupling to the transport system. The sequence is that of Phosphate import ATP-binding protein PstB 1 from Vibrio cholerae serotype O1 (strain ATCC 39315 / El Tor Inaba N16961).